We begin with the raw amino-acid sequence, 152 residues long: MIFTKEPAHVFYVLVSAFRSNLCDEVNMSRHRHMVSTLRAAPGLYGSVESTDLTGCYREAISSAPTEEKTVRVRCKDKAQALNVARLACNEWEQDCVLVYKSQTHTAGLVYAKGIDGYKAERLPGSFQEVPKGAPLQGCFTIDEFGRRWQVQ.

In terms of assembly, homotetramer. Interacts with host METK; this interaction induces the polymerization of METK into filaments that are enzymatically inactive.

The catalysed reaction is S-adenosyl-L-methionine = L-homoserine lactone + S-methyl-5'-thioadenosine. Functionally, degrades the intracellular SAM pools of the host cell and inhibits the host S-adenosylmethionine synthase METK/MAT, thereby preventing methylation of the viral genome. Induces the polymerization of METK into filaments that are enzymatically inactive. Keeping the viral genome in an unmethylated state allows the phage to shift from a lytic infection under normal growth conditions to a transient lysogenic infection under glucose starvation, by blocking its own expression. Does not protect the virus immune against host restriction-modification systems. The sequence is that of S-Adenosylmethionine lyase from Escherichia coli (Bacteriophage T3).